We begin with the raw amino-acid sequence, 459 residues long: Chromosomal replication initiator protein DnaA (459 aa).

A domain I, interacts with DnaA modulators region spans residues 1 to 74; it reads MMEMPIDNLW…ANVVQSILGH (74 aa). A domain II region spans residues 74–117; the sequence is HPVEIYITVAKGEEFEEIGGGGEWELPTTNIINETPNQNRQPNT. The tract at residues 118 to 334 is domain III, AAA+ region; it reads ELNAKYVFSR…GALTRALAYI (217 aa). Positions 162, 164, 165, and 166 each coordinate ATP. The domain IV, binds dsDNA stretch occupies residues 335–459; it reads SIWGLPMTVA…IKMNSRSRKP (125 aa).

This sequence belongs to the DnaA family. In terms of assembly, oligomerizes as a right-handed, spiral filament on DNA at oriC.

The protein localises to the cytoplasm. Functionally, plays an essential role in the initiation and regulation of chromosomal replication. ATP-DnaA binds to the origin of replication (oriC) to initiate formation of the DNA replication initiation complex once per cell cycle. Binds the DnaA box (a 9 base pair repeat at the origin) and separates the double-stranded (ds)DNA. Forms a right-handed helical filament on oriC DNA; dsDNA binds to the exterior of the filament while single-stranded (ss)DNA is stabiized in the filament's interior. The ATP-DnaA-oriC complex binds and stabilizes one strand of the AT-rich DNA unwinding element (DUE), permitting loading of DNA polymerase. After initiation quickly degrades to an ADP-DnaA complex that is not apt for DNA replication. Binds acidic phospholipids. This Nostoc sp. (strain PCC 7120 / SAG 25.82 / UTEX 2576) protein is Chromosomal replication initiator protein DnaA.